Consider the following 294-residue polypeptide: uncharacterized protein (294 aa).

The N-terminal stretch at 1–16 (MQNFMVLLLLIVAVVA) is a signal peptide. 2 N-linked (GlcNAc...) asparagine; by host glycosylation sites follow: N25 and N162.

This is an uncharacterized protein from Acheta domesticus (House cricket).